The primary structure comprises 316 residues: MDIPLDAAEIRPEPPNSLDLNGSSTRKIKLTAPNINLSLDHSEGSILSDDNLDTPDELDINVDDLDTPDEADSFDYTGQDDQPALGEAVQEDFESIQEYTAEEERADNRLWRTVVIGEQEQRIDMKVIEPYKKVISHGGYYGEGVNAIIVFAACFLPDSSRPDYNYVMENLFLYVISTLELMVAEDYMVVYLNGATPRRKMPGLGWMKKCYQMIDRRLRKNLKSFIIVHPSWFIRTILALTRPFISSKFSSKIKYVSTLAELSELIPMEYVHIPETIVKLDEELRESESPKAGCLPNEPEMNTLEEEFENKMGDND.

A disordered region spans residues 1–24 (MDIPLDAAEIRPEPPNSLDLNGSS). Positions 128-285 (IEPYKKVISH…TIVKLDEELR (158 aa)) constitute a CRAL-TRIO domain. A disordered region spans residues 287 to 316 (SESPKAGCLPNEPEMNTLEEEFENKMGDND).

It is found in the cytoplasm. The chain is Protein prune homolog 2 (Prune2) from Xenopus tropicalis (Western clawed frog).